Consider the following 308-residue polypeptide: Serine/threonine-protein phosphatase PP1 (308 aa).

Mn(2+) contacts are provided by D64, H66, D92, and N124. Residue H125 is the Proton donor of the active site. The Mn(2+) site is built by H173 and H248.

This sequence belongs to the PPP phosphatase family. PP-1 subfamily. The cofactor is Mn(2+).

Its subcellular location is the cytoplasm. The catalysed reaction is O-phospho-L-seryl-[protein] + H2O = L-seryl-[protein] + phosphate. It carries out the reaction O-phospho-L-threonyl-[protein] + H2O = L-threonyl-[protein] + phosphate. In Neurospora crassa (strain ATCC 24698 / 74-OR23-1A / CBS 708.71 / DSM 1257 / FGSC 987), this protein is Serine/threonine-protein phosphatase PP1 (pph-3).